Reading from the N-terminus, the 337-residue chain is Protein EXORDIUM-like 3 (337 aa).

Positions 1-25 (MHSLPVNLVLTVLTVFLTSPAQVIG) are cleaved as a signal peptide. N-linked (GlcNAc...) asparagine glycans are attached at residues Asn34, Asn66, and Asn119.

It belongs to the EXORDIUM family.

It is found in the secreted. Its subcellular location is the extracellular space. It localises to the apoplast. Functionally, may play a role in a brassinosteroid-dependent regulation of growth and development. In Arabidopsis thaliana (Mouse-ear cress), this protein is Protein EXORDIUM-like 3 (EXL3).